Reading from the N-terminus, the 75-residue chain is Putative antitoxin PH1062.1 (75 aa).

This sequence belongs to the UPF0330 family.

Its function is as follows. Possibly the antitoxin component of a type II toxin-antitoxin (TA) system. This chain is Putative antitoxin PH1062.1, found in Pyrococcus horikoshii (strain ATCC 700860 / DSM 12428 / JCM 9974 / NBRC 100139 / OT-3).